The following is a 121-amino-acid chain: Protein YxiB (121 aa).

This chain is Protein YxiB (yxiB), found in Bacillus subtilis (strain 168).